The sequence spans 252 residues: Putative peptide zinc metalloprotease protein YydH (252 aa).

Helical transmembrane passes span 56 to 76 (FFYLFLSFTALMFILNYIHLI) and 85 to 105 (VFYGWKMWIIIVIYFIMNIVL). H106 is a Zn(2+) binding site. E107 is a catalytic residue. H110 contacts Zn(2+). The next 3 helical transmembrane spans lie at 152–172 (IIVHLFGLFINYLLINTLELI), 181–201 (ALTMAFMLFSSTLLWNLIPIL), and 231–251 (IQIIGIGLAVNSVVHWILYIV).

The protein belongs to the peptidase M50B family. Zn(2+) serves as cofactor.

The protein resides in the cell membrane. In terms of biological role, required for production of the modified peptide YydF. May process the precursor form of YydF to release the active peptide (Potential). The protein is Putative peptide zinc metalloprotease protein YydH (yydH) of Bacillus subtilis (strain 168).